The following is a 493-amino-acid chain: Trigger factor (493 aa).

The region spanning 162–243 (GDFVSLDLSA…VRGVKEKELP (82 aa)) is the PPIase FKBP-type domain. The segment at 432-493 (ELALPARPAP…AAVDSGDRDI (62 aa)) is disordered. Residues 449–470 (HAGHDHEGHDHADHAGHDHAGD) are compositionally biased toward basic and acidic residues. Residues 474–485 (AEPAEAPAATAA) show a composition bias toward low complexity.

The protein belongs to the FKBP-type PPIase family. Tig subfamily.

It is found in the cytoplasm. The enzyme catalyses [protein]-peptidylproline (omega=180) = [protein]-peptidylproline (omega=0). Involved in protein export. Acts as a chaperone by maintaining the newly synthesized protein in an open conformation. Functions as a peptidyl-prolyl cis-trans isomerase. The polypeptide is Trigger factor (Frankia alni (strain DSM 45986 / CECT 9034 / ACN14a)).